Reading from the N-terminus, the 98-residue chain is Large ribosomal subunit protein uL23 (98 aa).

The protein belongs to the universal ribosomal protein uL23 family. As to quaternary structure, part of the 50S ribosomal subunit. Contacts protein L29, and trigger factor when it is bound to the ribosome.

Its function is as follows. One of the early assembly proteins it binds 23S rRNA. One of the proteins that surrounds the polypeptide exit tunnel on the outside of the ribosome. Forms the main docking site for trigger factor binding to the ribosome. The sequence is that of Large ribosomal subunit protein uL23 from Bifidobacterium animalis subsp. lactis (strain AD011).